A 688-amino-acid chain; its full sequence is Mitochondrial potassium channel ATP-binding subunit (688 aa).

Residues 1–31 (MLFHFLQAGLRQCRPPARLVGLETGLSGARG) constitute a mitochondrion transit peptide. 4 consecutive transmembrane segments (helical) span residues 115–135 (PQLI…LLNI), 168–188 (LKLL…IVLL), 268–288 (GLLL…GSFL), and 342–362 (VLGV…NCIV). The region spanning 121–409 (LTAVLLAFGA…MSVLFGQVVR (289 aa)) is the ABC transmembrane type-1 domain. In terms of domain architecture, ABC transporter spans 442 to 679 (IHFKDVSFSY…GGLYADLIRR (238 aa)). 477–484 (GQSGGGKS) serves as a coordination point for ATP.

Belongs to the ABC transporter superfamily. ABCB family. Multidrug resistance exporter (TC 3.A.1.201) subfamily. In terms of assembly, component of the mitochondrial potassium channel (mitoK(ATP)).

It localises to the mitochondrion inner membrane. ATP-binding subunit of the mitochondrial ATP-gated potassium channel (mitoK(ATP)). Together with pore-forming subunit CCDC51/MITOK of the mitoK(ATP) channel, mediates ATP-dependent potassium currents across the mitochondrial inner membrane. An increase in ATP intracellular levels closes the channel, inhibiting K(+) transport, whereas a decrease in ATP levels enhances K(+) uptake in the mitochondrial matrix. Plays a role in mitochondrial iron transport. Required for maintenance of normal cardiac function, possibly by influencing mitochondrial iron export and regulating the maturation of cytosolic iron sulfur cluster-containing enzymes. The protein is Mitochondrial potassium channel ATP-binding subunit of Xenopus tropicalis (Western clawed frog).